We begin with the raw amino-acid sequence, 533 residues long: Glucosidase 2 subunit beta (533 aa).

The first 13 residues, 1–13 (MLLLLLLLPMCWA), serve as a signal peptide directing secretion. Ser23 is subject to Phosphoserine. LDL-receptor class A domains follow at residues 36-70 (FTCL…AACP) and 71-112 (NGSF…IVCE). 2 disulfides stabilise this stretch: Cys38-Cys57 and Cys55-Cys69. Residue Asp48 participates in substrate binding. Residues Gln49, Asp52, Tyr54, Asp56, Asp62, and Glu63 each coordinate Ca(2+). A substrate-binding site is contributed by Asp52. Residue Asn71 is glycosylated (N-linked (GlcNAc...) asparagine). 3 cysteine pairs are disulfide-bonded: Cys76–Cys98, Cys96–Cys111, and Cys99–Cys115. A Phosphoserine; by PKC modification is found at Ser88. Ca(2+) contacts are provided by Asp93, Val95, Asp97, Asp103, and Glu104. Lys165 bears the N6-succinyllysine mark. Ser167 is modified (phosphoserine). 2 consecutive EF-hand domains span residues 208–243 (RERE…DTDG) and 244–279 (DGAL…RDKY). Residues Asp221, Asp223, Asp225, and Glu232 each coordinate Ca(2+). The segment at 284-363 (LPTEYPPSPP…SPTEEDRMPP (80 aa)) is disordered. Over residues 312-336 (TEEEDEDEEDEETEEDEDEEDEDSQ) the composition is skewed to acidic residues. Phosphoserine; by PKC is present on residues Ser388 and Ser395. The MRH domain occupies 418–519 (SQCYELTTNE…ELMTPAACPE (102 aa)). An intrachain disulfide couples Cys420 to Cys433. Ser439 is subject to Phosphoserine; by PKC. Disulfide bonds link Cys476/Cys505 and Cys490/Cys517. Asn481 is a glycosylation site (N-linked (GlcNAc...) asparagine). Positions 530 to 533 (HDEL) match the Prevents secretion from ER motif.

As to quaternary structure, heterodimer of a catalytic alpha subunit (GANAB) and a beta subunit (PRKCSH). Binds glycosylated PTPRC. Ubiquitous. Highly expressed in liver, spleen, lung, duodenum, stomach, adrenal gland, pituitary, testis, corpus luteum, uterus and fetal ovary.

It localises to the endoplasmic reticulum. It participates in glycan metabolism; N-glycan metabolism. Functionally, regulatory subunit of glucosidase II that cleaves sequentially the 2 innermost alpha-1,3-linked glucose residues from the Glc(2)Man(9)GlcNAc(2) oligosaccharide precursor of immature glycoproteins. Required for efficient PKD1/Polycystin-1 biogenesis and trafficking to the plasma membrane of the primary cilia. The protein is Glucosidase 2 subunit beta (PRKCSH) of Bos taurus (Bovine).